A 34-amino-acid chain; its full sequence is Mu-theraphotoxin-CCy1a (34 aa).

3 disulfides stabilise this stretch: Cys3–Cys18, Cys10–Cys23, and Cys17–Cys30.

It belongs to the neurotoxin 10 (Hwtx-1) family. 14 (Hntx-1) subfamily. Expressed by the venom gland.

It localises to the secreted. Its function is as follows. Voltage-gated sodium channel Nav1.7/SCN9A inhibitor. The polypeptide is Mu-theraphotoxin-CCy1a (Chromatopelma cyaneopubescens (Greenbottle blue tarantula)).